We begin with the raw amino-acid sequence, 377 residues long: Homoserine O-succinyltransferase (377 aa).

Residues 50–359 (NAVLVCHALS…SSHGHDSFLM (310 aa)) form the AB hydrolase-1 domain. The Nucleophile role is filled by Ser156. Arg226 contributes to the substrate binding site. Catalysis depends on residues Asp321 and His354. A substrate-binding site is contributed by Asp355.

The protein belongs to the AB hydrolase superfamily. MetX family. As to quaternary structure, homodimer.

It is found in the cytoplasm. The enzyme catalyses L-homoserine + succinyl-CoA = O-succinyl-L-homoserine + CoA. The protein operates within amino-acid biosynthesis; L-methionine biosynthesis via de novo pathway; O-succinyl-L-homoserine from L-homoserine: step 1/1. Functionally, transfers a succinyl group from succinyl-CoA to L-homoserine, forming succinyl-L-homoserine. The polypeptide is Homoserine O-succinyltransferase (Nitrosospira multiformis (strain ATCC 25196 / NCIMB 11849 / C 71)).